We begin with the raw amino-acid sequence, 376 residues long: Histidinol-phosphate aminotransferase (376 aa).

Lys-230 is subject to N6-(pyridoxal phosphate)lysine.

The protein belongs to the class-II pyridoxal-phosphate-dependent aminotransferase family. Histidinol-phosphate aminotransferase subfamily. As to quaternary structure, homodimer. It depends on pyridoxal 5'-phosphate as a cofactor.

It carries out the reaction L-histidinol phosphate + 2-oxoglutarate = 3-(imidazol-4-yl)-2-oxopropyl phosphate + L-glutamate. Its pathway is amino-acid biosynthesis; L-histidine biosynthesis; L-histidine from 5-phospho-alpha-D-ribose 1-diphosphate: step 7/9. The sequence is that of Histidinol-phosphate aminotransferase from Trichodesmium erythraeum (strain IMS101).